The primary structure comprises 214 residues: Ependymin (214 aa).

An N-terminal signal peptide occupies residues 1-20; the sequence is MHTVKLLCVVFSCLCAVAWA. Asn-70 and Asn-93 each carry an N-linked (GlcNAc...) asparagine glycan.

It belongs to the ependymin family. Forms disulfide-linked dimers. Post-translationally, binds calcium through the terminal sialic acids.

The protein localises to the secreted. Its function is as follows. May play a role in neural plasticity. May be involved during axon regeneration. In Notemigonus crysoleucas (Golden shiner), this protein is Ependymin (epd).